A 604-amino-acid chain; its full sequence is Afamin (604 aa).

Positions 1–21 (MKQLKLTGFVIFFFFLTESLT) are cleaved as a signal peptide. Albumin domains lie at 22–210 (LPTQ…EPFI), 211–403 (YYLK…RFNE), and 404–598 (TTEK…PKLA). 17 cysteine pairs are disulfide-bonded: Cys77/Cys86, Cys99/Cys114, Cys113/Cys124, Cys148/Cys193, Cys192/Cys201, Cys224/Cys270, Cys269/Cys277, Cys289/Cys303, Cys302/Cys313, Cys340/Cys385, Cys384/Cys393, Cys416/Cys462, Cys461/Cys470, Cys483/Cys499, Cys498/Cys509, Cys536/Cys581, and Cys580/Cys589. N-linked (GlcNAc...) asparagine glycosylation is present at Asn109. Positions 215-319 (ALSSYQKNAC…RGECIIYSNK (105 aa)) are binding pocket for hydrophobic ligands. Asn434 is a glycosylation site (N-linked (GlcNAc...) asparagine).

This sequence belongs to the ALB/AFP/VDB family. Forms a 1:1 complex with Wnt family members; interacts with WNT3A and WNT5A. Interacts with WNT1, WNT2B, WNT3, WNT7A, WNT7B, WNT8, WNT9A, WNT9B, WNT10A and WNT10B. In terms of processing, N-glycosylated; more than 90% of the glycans are sialylated.

Its subcellular location is the secreted. Functionally, functions as a carrier for hydrophobic molecules in body fluids. Essential for the solubility and activity of lipidated Wnt family members, including WNT1, WNT2B, WNT3, WNT3A, WNT5A, WNT7A, WNT7B, WNT8, WNT9A, WNT9B, WNT10A and WNT10B. Binds vitamin E. May transport vitamin E in body fluids under conditions where the lipoprotein system is not sufficient. May be involved in the transport of vitamin E across the blood-brain barrier. This chain is Afamin (AFM), found in Bos taurus (Bovine).